Reading from the N-terminus, the 89-residue chain is Small ribosomal subunit protein uS15 (89 aa).

This sequence belongs to the universal ribosomal protein uS15 family. In terms of assembly, part of the 30S ribosomal subunit. Forms a bridge to the 50S subunit in the 70S ribosome, contacting the 23S rRNA.

In terms of biological role, one of the primary rRNA binding proteins, it binds directly to 16S rRNA where it helps nucleate assembly of the platform of the 30S subunit by binding and bridging several RNA helices of the 16S rRNA. Forms an intersubunit bridge (bridge B4) with the 23S rRNA of the 50S subunit in the ribosome. This chain is Small ribosomal subunit protein uS15, found in Pseudoalteromonas atlantica (strain T6c / ATCC BAA-1087).